Reading from the N-terminus, the 150-residue chain is 3-dehydroquinate dehydratase (150 aa).

Tyrosine 26 serves as the catalytic Proton acceptor. Residues asparagine 77, histidine 83, and aspartate 90 each contribute to the substrate site. Residue histidine 103 is the Proton donor of the active site. Substrate contacts are provided by residues 104–105 and arginine 114; that span reads LS.

It belongs to the type-II 3-dehydroquinase family. Homododecamer.

The enzyme catalyses 3-dehydroquinate = 3-dehydroshikimate + H2O. Its pathway is metabolic intermediate biosynthesis; chorismate biosynthesis; chorismate from D-erythrose 4-phosphate and phosphoenolpyruvate: step 3/7. Its function is as follows. Catalyzes a trans-dehydration via an enolate intermediate. This chain is 3-dehydroquinate dehydratase, found in Histophilus somni (strain 129Pt) (Haemophilus somnus).